The following is a 469-amino-acid chain: Histone chaperone rtt-106 (469 aa).

Disordered regions lie at residues 54–73 (EEPA…PNGA) and 364–469 (MAEQ…EGEE). Basic and acidic residues-rich tracts occupy residues 364 to 379 (MAEQ…ENAK) and 402 to 415 (ELER…QRLQ). 2 stretches are compositionally biased toward acidic residues: residues 416–433 (DEED…EGES) and 440–469 (SEEE…EGEE).

Belongs to the RTT106 family. In terms of assembly, interacts with histones H3 and H4.

Its subcellular location is the nucleus. It localises to the chromosome. Its function is as follows. Histones H3 and H4 chaperone involved in the nucleosome formation and heterochromatin silencing. Required for the deposition of H3K56ac-carrying H3-H4 complex onto newly-replicated DNA. Plays a role in the transcriptional regulation of the cell-cycle dependent histone genes by creating a repressive structure at the core histone gene promoter. The sequence is that of Histone chaperone rtt-106 (rtt-106) from Neurospora crassa (strain ATCC 24698 / 74-OR23-1A / CBS 708.71 / DSM 1257 / FGSC 987).